The following is a 1292-amino-acid chain: MAIIKRGVRQKTQPPAKRTTNIKKATFDSGKKKEVGVSDLTLLSKISDEHINENLKRRFENGSIYTYIGHVLISVNPFRDLGIYTDQVLETYKGRNRLEVPPHVFAIAEAMYYNLKAYNENQCVIISGESGAGKTEAAKRIMQYIAAASSSHEASIGRIKDMVLATNPLLESFGCAKTLRNNNSSRHGKYLEIRFNAQFEPCAGQITNYLLEKQRVVGQIKNERNFHIFYQFSKGASDRYRKTYGVQLPEQYVYTSASGCTSVDTIDDLNDYEATLEAMNVIGLSQAEQDEIFRLLSAILWIGNVTFMEDDEGNAKIADTSITDFVAYLLQVDAGLLVKSLVERTIETTHGMRRGSIYNVPLNIVQATAVRDALAKAIYNNLFEWIVDRVNVSLQALPGAEKSIGILDIYGFEIFEHNSFEQICINYVNEKLQQIFIQLTLKSEQEEYAKEQIQWTPIKYFDNKVVCELIEAKRPPGIFAALNDSVATAHADSNAADQAFAQRLNLFTSNPHFELRSSKFVIKHYAGDVTYDIGGMTDKNKDQLQRDLVELLNSTSNTFLATIFPDTGDKDSKRRPPTAGDKIIRSANELVDTLSKAQPSYIRTIKPNQTKSPLDYDDRQVLHQVKYLGLQENVRIRRAGFAYRQTFEKFVERFYLLSPQCSYAGDYTWQGNTLDAVNLILRDTSIPVTEYQLGVTKVFIKTPETLFALENMRDKYWHNMASRIQRAWRRFLQRRIDSAIRIQRAIREMKHGNQFEQLRDYGNKLLGGRKERRAMSLLGYRAFLGDYLSCNELKSKGAFVKRKAGINDHVVFSINGQALHSKFGRSAQRLPKTFILTPSHFYIIGKTLVNNQLTYAVDYKIDVRQIVYVSLTNLQDDWVGIFVSNSTQPDPLINTYFKTELITHLKKLNNRIEIKIGPTIEYQKKPGKIHAVKSQINENAPPLGDIYKSSTIMVRRGRPGNCSQRKKPLSTRLPDTYTTRETGYKNAGHPTNIRQVQEPTHISHSQQHTSSNLGFVYSLNPSAVNHPRPVPSGSVGTTSTPPKQAASAAQAAYNPHKLGGNMDNSSAAYGNASALPNSAPSQAPKPASRPVPKPAPRPGPKPGPKPGPKPGPKPAPKPMPRPAKSVENSVPRPNAIEQGKTAPPPPPPPPPPPAAVPSEPVYEAAFDFPGSGSPNEFPLKKGDRIYVTRQEPSGWSLAKALDGSKEGWVPTAYIVESKAAFSQLEQPVASSAPLGNSGVATREAGTTSAATAAASAATPTAFSAGLADALAARANKMRHEDSGSDDNADDDW.

A Myosin motor domain is found at 35 to 714 (VGVSDLTLLS…TLFALENMRD (680 aa)). ATP is bound at residue 128-135 (GESGAGKT). S356 carries the phosphoserine modification. The segment at 403–485 (SIGILDIYGF…PGIFAALNDS (83 aa)) is actin-binding. 2 consecutive IQ domains span residues 718 to 738 (HNMA…RIDS) and 739 to 764 (AIRI…YGNK). Residues 770 to 960 (KERRAMSLLG…TIMVRRGRPG (191 aa)) form the TH1 domain. 3 disordered regions span residues 956–991 (RGRP…GHPT), 1017–1180 (YSLN…FPLK), and 1227–1258 (PVAS…SAAT). The segment covering 1062-1081 (MDNSSAAYGNASALPNSAPS) has biased composition (polar residues). Composition is skewed to pro residues over residues 1087–1121 (ASRP…PMPR) and 1142–1155 (APPP…PPAA). Residues 1157 to 1219 (PSEPVYEAAF…PTAYIVESKA (63 aa)) form the SH3 domain. Over residues 1240-1258 (ATREAGTTSAATAAASAAT) the composition is skewed to low complexity.

This sequence belongs to the TRAFAC class myosin-kinesin ATPase superfamily. Myosin family. In terms of processing, phosphorylation of the TEDS site (Ser-356) is required for the polarization of the actin cytoskeleton. Phosphorylation probably activates the myosin-I ATPase activity.

The protein resides in the cytoplasm. Its subcellular location is the cytoskeleton. It localises to the actin patch. In terms of biological role, type-I myosin implicated in the organization of the actin cytoskeleton. Required for proper actin cytoskeleton polarization. At the cell cortex, assembles in patch-like structures together with proteins from the actin-polymerizing machinery and promotes actin assembly. Functions as actin nucleation-promoting factor (NPF) for the Arp2/3 complex. This chain is Myosin-1 (MYO1), found in Eremothecium gossypii (strain ATCC 10895 / CBS 109.51 / FGSC 9923 / NRRL Y-1056) (Yeast).